A 414-amino-acid chain; its full sequence is Proton/glutamate-aspartate symporter (414 aa).

Residues 1–3 (MKK) are Cytoplasmic-facing. Residues 4–24 (LIAFQILIALAVGAVIGHFFP) form a helical membrane-spanning segment. At 25-42 (DFGMALRPVGDGFIRLIK) the chain is on the extracellular side. Residues 43–63 (MIVVPIVFSTIVIGAAGSGSM) traverse the membrane as a helical segment. The Cytoplasmic segment spans residues 64–73 (KKMGSLGIKT). The helical transmembrane segment at 74–94 (IIWFEVITTLVLGLGLLLANV) threads the bilayer. The Extracellular segment spans residues 95–144 (LKPGVGLDLSHLAKKDIHELSGYTDKVVDFKQMILDIIPTNIIDVMARND). A helical transmembrane segment spans residues 145–165 (LLAVIFFAILFGVAAAGIGKA). Over 166–182 (SEPVMKFFESTAQIMFK) the chain is Cytoplasmic. The chain crosses the membrane as a helical span at residues 183–203 (LTQIVMVTAPIGVLALMAASV). Residues 204–219 (GQYGIELLLPMFKLVG) are Extracellular-facing. Residues 220-240 (TVFLGLFLILFVLFPLVGLIF) traverse the membrane as a helical segment. Residue Gln241 is a topological domain, cytoplasmic. Residues 242–262 (IKYFEVLKMIWDLFLIAFSTT) traverse the membrane as a helical segment. Residues 263–300 (STETILPQLMDRMEKYGCPKRVVSFVVPSGLSLNCDGS) are Extracellular-facing. Residues 301–321 (SLYLSVSCIFLAQAFQVDMTL) traverse the membrane as a helical segment. Residues 322–324 (SQQ) lie on the Cytoplasmic side of the membrane. Helical transmembrane passes span 325–345 (LLMM…PSGS) and 346–366 (LVVL…VAII). At 367–414 (AGVDRVMDMARTGVNVPGHAIACIVVSKWEKAFRQKEWVSANSQTESI) the chain is on the cytoplasmic side.

This sequence belongs to the dicarboxylate/amino acid:cation symporter (DAACS) (TC 2.A.23) family.

The protein resides in the cell membrane. With respect to regulation, glutamate uptake is inhibited by beta-hydroxyaspartate and cysteic acid. Its function is as follows. Catalyzes the proton-dependent, binding-protein-independent transport of glutamate and aspartate. The sequence is that of Proton/glutamate-aspartate symporter from Bacillus subtilis (strain 168).